The primary structure comprises 57 residues: Small polypeptide DEVIL 20 (57 aa).

The N-linked (GlcNAc...) asparagine glycan is linked to asparagine 5. Positions 16 to 47 (TFKAKCSHMVRKQRAKFYILGRCLAMLVCGRG) are required for DVL/RTFL small polypeptide activity. Residues 29 to 45 (RAKFYILGRCLAMLVCG) traverse the membrane as a helical segment.

The protein belongs to the DVL/RTFL small polypeptides family.

Its subcellular location is the cell membrane. Small polypeptide acting as a regulatory molecule which coordinates cellular responses required for differentiation, growth and development, probably by restricting polar cell proliferation in lateral organs and coordinating socket cell recruitment and differentiation at trichome sites. In Arabidopsis thaliana (Mouse-ear cress), this protein is Small polypeptide DEVIL 20.